A 147-amino-acid polypeptide reads, in one-letter code: MGATGLGFLLSWRQDNLNGTDCQGCNILYFSETTGSMCSELSLNRGLEARRKKDLKDSFLWRYGKVGCISLPLREMTAWINPPQISEIFQGYHQRVHGADALSLQTNSLRSRLSSQCLGQSFLLRTLERGRGFRALGDICGHVHEED.

In terms of tissue distribution, expressed in testis. Detected in spermatocytes, spermatids and spermatozoa (at protein level).

This chain is PTPN13-like protein, Y-linked (PRY), found in Homo sapiens (Human).